We begin with the raw amino-acid sequence, 93 residues long: Small ribosomal subunit protein uS19 (93 aa).

The protein belongs to the universal ribosomal protein uS19 family.

In terms of biological role, protein S19 forms a complex with S13 that binds strongly to the 16S ribosomal RNA. The polypeptide is Small ribosomal subunit protein uS19 (Cutibacterium acnes (strain DSM 16379 / KPA171202) (Propionibacterium acnes)).